Reading from the N-terminus, the 109-residue chain is U4-lycotoxin-Ls1a (109 aa).

The first 22 residues, Met-1 to Ala-22, serve as a signal peptide directing secretion. A propeptide spanning residues Ile-23–Arg-44 is cleaved from the precursor. The knottin domain stretch occupies residues Ala-45 to Cys-88. 4 disulfide bridges follow: Cys-48-Cys-63, Cys-55-Cys-72, Cys-62-Cys-88, and Cys-74-Cys-86. Positions Gln-89–Val-108 are linear cationic cytotoxin domain.

This sequence belongs to the neurotoxin 19 (CSTX) family. 05 (U4-Lctx) subfamily. As to expression, expressed by the venom gland.

The protein resides in the secreted. In terms of biological role, enhances the high-affinity desensitization of human P2RX3 purinoceptors. The protein is U4-lycotoxin-Ls1a of Lycosa singoriensis (Wolf spider).